The primary structure comprises 453 residues: Ribosomal protein uS12 methylthiotransferase RimO (453 aa).

An MTTase N-terminal domain is found at 5–120; sequence PKVGFVSLGC…VMQAVHSHLP (116 aa). [4Fe-4S] cluster contacts are provided by C14, C50, C79, C151, C155, and C158. Positions 137–382 constitute a Radical SAM core domain; that stretch reads LTPRHYAYLK…MEVAEEVSAQ (246 aa). The TRAM domain maps to 385–453; sequence QRKVGKTLKV…ADGHDLWGEV (69 aa).

Belongs to the methylthiotransferase family. RimO subfamily. It depends on [4Fe-4S] cluster as a cofactor.

Its subcellular location is the cytoplasm. The enzyme catalyses L-aspartate(89)-[ribosomal protein uS12]-hydrogen + (sulfur carrier)-SH + AH2 + 2 S-adenosyl-L-methionine = 3-methylsulfanyl-L-aspartate(89)-[ribosomal protein uS12]-hydrogen + (sulfur carrier)-H + 5'-deoxyadenosine + L-methionine + A + S-adenosyl-L-homocysteine + 2 H(+). Functionally, catalyzes the methylthiolation of an aspartic acid residue of ribosomal protein uS12. This chain is Ribosomal protein uS12 methylthiotransferase RimO, found in Burkholderia ambifaria (strain ATCC BAA-244 / DSM 16087 / CCUG 44356 / LMG 19182 / AMMD) (Burkholderia cepacia (strain AMMD)).